Reading from the N-terminus, the 464-residue chain is Trehalose-6-phosphate synthase (464 aa).

Arg-10 provides a ligand contact to D-glucose 6-phosphate. 23-24 (GG) lines the UDP-alpha-D-glucose pocket. Residues Tyr-81 and Asp-135 each coordinate D-glucose 6-phosphate. Residues Arg-268 and Lys-273 each coordinate UDP-alpha-D-glucose. Residue Arg-306 participates in D-glucose 6-phosphate binding. Position 371–375 (371–375 (LVAKE)) interacts with UDP-alpha-D-glucose.

This sequence belongs to the glycosyltransferase 20 family. As to quaternary structure, homotetramer.

The catalysed reaction is D-glucose 6-phosphate + UDP-alpha-D-glucose = alpha,alpha-trehalose 6-phosphate + UDP + H(+). Its pathway is glycan biosynthesis; trehalose biosynthesis. Its function is as follows. Probably involved in the osmoprotection via the biosynthesis of trehalose. Catalyzes the transfer of glucose from UDP-alpha-D-glucose (UDP-Glc) to D-glucose 6-phosphate (Glc-6-P) to form trehalose-6-phosphate. Acts with retention of the anomeric configuration of the UDP-sugar donor. This chain is Trehalose-6-phosphate synthase, found in Sinorhizobium fredii (strain NBRC 101917 / NGR234).